We begin with the raw amino-acid sequence, 253 residues long: Probable glutathione transferase omega-2 (253 aa).

In terms of domain architecture, GST N-terminal spans 25–105; it reads GIYRIYNMRF…YLDDLFPESR (81 aa). Cys35 acts as the Nucleophile in catalysis. Glutathione contacts are provided by residues Lys62, Val75, and 89–90; that span reads ES. One can recognise a GST C-terminal domain in the interval 110–238; it reads DPYEKVQQKL…SQPTEMGVGF (129 aa).

Belongs to the GST superfamily. Omega family.

It carries out the reaction RX + glutathione = an S-substituted glutathione + a halide anion + H(+). It catalyses the reaction L-dehydroascorbate + 2 glutathione = glutathione disulfide + L-ascorbate. The catalysed reaction is methylarsonate + 2 glutathione + H(+) = methylarsonous acid + glutathione disulfide + H2O. Functionally, exhibits glutathione-dependent thiol transferase activity. Has dehydroascorbate reductase activity and may contribute to the recycling of ascorbic acid. Participates in the biotransformation of inorganic arsenic and reduces monomethylarsonic acid (MMA). The polypeptide is Probable glutathione transferase omega-2 (Caenorhabditis briggsae).